A 283-amino-acid polypeptide reads, in one-letter code: Ribosomal RNA small subunit methyltransferase A (283 aa).

Residues Asn-29, Leu-31, Gly-56, Glu-77, Asp-102, and Asn-123 each coordinate S-adenosyl-L-methionine.

It belongs to the class I-like SAM-binding methyltransferase superfamily. rRNA adenine N(6)-methyltransferase family. RsmA subfamily.

It localises to the cytoplasm. The catalysed reaction is adenosine(1518)/adenosine(1519) in 16S rRNA + 4 S-adenosyl-L-methionine = N(6)-dimethyladenosine(1518)/N(6)-dimethyladenosine(1519) in 16S rRNA + 4 S-adenosyl-L-homocysteine + 4 H(+). Functionally, specifically dimethylates two adjacent adenosines (A1518 and A1519) in the loop of a conserved hairpin near the 3'-end of 16S rRNA in the 30S particle. May play a critical role in biogenesis of 30S subunits. In Acidobacterium capsulatum (strain ATCC 51196 / DSM 11244 / BCRC 80197 / JCM 7670 / NBRC 15755 / NCIMB 13165 / 161), this protein is Ribosomal RNA small subunit methyltransferase A.